A 164-amino-acid polypeptide reads, in one-letter code: Dehydrin Rab16B (164 aa).

The disordered stretch occupies residues 1 to 164 (MENYQGQHGY…KIKEKLPGQH (164 aa)). Residues 25 to 53 (GQYGGGATAPGGGHGAMGMGGHAGAGAGG) show a composition bias toward gly residues. Low complexity predominate over residues 107–117 (GNNQQQQQMMG). Residues 147 to 164 (GEKKGFMDKIKEKLPGQH) are compositionally biased toward basic and acidic residues.

Belongs to the plant dehydrin family.

This chain is Dehydrin Rab16B (RAB16B), found in Oryza sativa subsp. indica (Rice).